A 1160-amino-acid polypeptide reads, in one-letter code: Large proline-rich protein BAG6 (1160 aa).

The Ubiquitin-like domain occupies 7–82 (IEVTVKTLDS…HLVERPPPQS (76 aa)). Disordered regions lie at residues 76–114 (ERPPPQSSQPGGGGGGVSGSSGAADGGSSSSQSSAYTTS), 206–261 (EGQS…HPSP), 367–422 (IPMN…GQGT), 478–547 (ASAG…QTNQ), 563–628 (GDQT…DNLA), 672–711 (SGQPVFPSPNQQPPPSQATPPSAPSGPAPTTAPSGGAETL), 962–1038 (SARR…AEPW), and 1126–1160 (YAQQVKSDIKKRLSDDPDYNHQRFPNTHRVFSEDA). Positions 85–94 (PGGGGGGVSG) are enriched in gly residues. Composition is skewed to low complexity over residues 95 to 110 (SSGAADGGSSSSQSSA) and 223 to 233 (SSSSFSAHPMD). 2 stretches are compositionally biased toward polar residues: residues 247-257 (QTEGETQSGPN) and 371-417 (LGST…QQTG). 2 stretches are compositionally biased toward low complexity: residues 478-495 (ASAGHQGQQQGTAGAGAQ) and 566-614 (TSTT…STAS). Pro residues predominate over residues 677 to 698 (FPSPNQQPPPSQATPPSAPSGP). Residues 699–708 (APTTAPSGGA) are compositionally biased toward low complexity. Residues 1132-1146 (SDIKKRLSDDPDYNH) are compositionally biased toward basic and acidic residues.

Component of the bag6/bat3 complex.

The protein resides in the cytoplasm. It localises to the cytosol. It is found in the nucleus. The protein localises to the secreted. Its subcellular location is the extracellular exosome. ATP-independent molecular chaperone preventing the aggregation of misfolded and hydrophobic patches-containing proteins. Functions as part of a cytosolic protein quality control complex, the bag6/bat3 complex, which maintains these client proteins in a soluble state and participates in their proper delivery to the endoplasmic reticulum or alternatively can promote their sorting to the proteasome where they undergo degradation. The bag6/bat3 complex is involved in the post-translational delivery of tail-anchored/type II transmembrane proteins to the endoplasmic reticulum membrane. Similarly, the bag6/bat3 complex also functions as a sorting platform for proteins of the secretory pathway that are mislocalized to the cytosol either delivering them to the proteasome for degradation or to the endoplasmic reticulum. The bag6/bat3 complex also plays a role in the endoplasmic reticulum-associated degradation (ERAD), a quality control mechanism that eliminates unwanted proteins of the endoplasmic reticulum through their retrotranslocation to the cytosol and their targeting to the proteasome. It maintains these retrotranslocated proteins in an unfolded yet soluble state condition in the cytosol to ensure their proper delivery to the proteasome. Also required for selective ubiquitin-mediated degradation of defective nascent chain polypeptides by the proteasome. Also involved in endoplasmic reticulum stress-induced pre-emptive quality control, a mechanism that selectively attenuates the translocation of newly synthesized proteins into the endoplasmic reticulum and reroutes them to the cytosol for proteasomal degradation. May ensure the proper degradation of these proteins and thereby protects the endoplasmic reticulum from protein overload upon stress. By stabilizing a large spectrum of proteins, may indirectly affect different biological processes including apoptosis. By controlling the steady-state expression of the IGF1R receptor, indirectly regulates the insulin-like growth factor receptor signaling pathway. Functionally, when nuclear, may also act as a component of some chromatin regulator complex. In Danio rerio (Zebrafish), this protein is Large proline-rich protein BAG6.